The primary structure comprises 448 residues: tRNA-2-methylthio-N(6)-dimethylallyladenosine synthase (448 aa).

Positions 3–120 (KKLFIKTHGC…LPTMLDSRQG (118 aa)) constitute an MTTase N-terminal domain. Residues Cys12, Cys49, Cys83, Cys158, Cys162, and Cys165 each coordinate [4Fe-4S] cluster. A Radical SAM core domain is found at 144-376 (TSDGATAFVS…QERLNQQTMQ (233 aa)). The region spanning 379–444 (RRMVGNTERI…PNSLRGDLAS (66 aa)) is the TRAM domain.

The protein belongs to the methylthiotransferase family. MiaB subfamily. In terms of assembly, monomer. [4Fe-4S] cluster serves as cofactor.

The protein localises to the cytoplasm. The catalysed reaction is N(6)-dimethylallyladenosine(37) in tRNA + (sulfur carrier)-SH + AH2 + 2 S-adenosyl-L-methionine = 2-methylsulfanyl-N(6)-dimethylallyladenosine(37) in tRNA + (sulfur carrier)-H + 5'-deoxyadenosine + L-methionine + A + S-adenosyl-L-homocysteine + 2 H(+). Functionally, catalyzes the methylthiolation of N6-(dimethylallyl)adenosine (i(6)A), leading to the formation of 2-methylthio-N6-(dimethylallyl)adenosine (ms(2)i(6)A) at position 37 in tRNAs that read codons beginning with uridine. In Chromohalobacter salexigens (strain ATCC BAA-138 / DSM 3043 / CIP 106854 / NCIMB 13768 / 1H11), this protein is tRNA-2-methylthio-N(6)-dimethylallyladenosine synthase.